Here is a 111-residue protein sequence, read N- to C-terminus: WAP four-disulfide core domain protein 12 (111 aa).

The signal sequence occupies residues 1–23; the sequence is MGSSSFLVLMVSLTLVTLVAAEG. The 48-residue stretch at 27–74 folds into the WAP domain; it reads GIEKAGVCPADNVRCFKSDPPQCHTDQDCLGERKCCYLHCGFKCVIPV. Intrachain disulfides connect Cys34/Cys62, Cys41/Cys66, Cys49/Cys61, and Cys55/Cys70. The tract at residues 80 to 111 is disordered; that stretch reads GGNKDEDVSGPCPEPGWEAKSPGSSSTGCPQK. Polar residues predominate over residues 101–111; it reads PGSSSTGCPQK.

The protein localises to the secreted. Functionally, antibacterial protein. Putative acid-stable proteinase inhibitor. The protein is WAP four-disulfide core domain protein 12 (WFDC12) of Chlorocebus aethiops (Green monkey).